A 230-amino-acid chain; its full sequence is Leucyl/phenylalanyl-tRNA--protein transferase (230 aa).

It belongs to the L/F-transferase family.

It localises to the cytoplasm. It catalyses the reaction N-terminal L-lysyl-[protein] + L-leucyl-tRNA(Leu) = N-terminal L-leucyl-L-lysyl-[protein] + tRNA(Leu) + H(+). It carries out the reaction N-terminal L-arginyl-[protein] + L-leucyl-tRNA(Leu) = N-terminal L-leucyl-L-arginyl-[protein] + tRNA(Leu) + H(+). The enzyme catalyses L-phenylalanyl-tRNA(Phe) + an N-terminal L-alpha-aminoacyl-[protein] = an N-terminal L-phenylalanyl-L-alpha-aminoacyl-[protein] + tRNA(Phe). Functions in the N-end rule pathway of protein degradation where it conjugates Leu, Phe and, less efficiently, Met from aminoacyl-tRNAs to the N-termini of proteins containing an N-terminal arginine or lysine. The sequence is that of Leucyl/phenylalanyl-tRNA--protein transferase from Syntrophotalea carbinolica (strain DSM 2380 / NBRC 103641 / GraBd1) (Pelobacter carbinolicus).